Here is a 127-residue protein sequence, read N- to C-terminus: Vacuolar ATPase assembly integral membrane protein VMA21 (127 aa).

The disordered stretch occupies residues 1–28; the sequence is MATRRNPTKESITTSPPPDQQPRQPGEL. Topologically, residues 1-45 are cytoplasmic; sequence MATRRNPTKESITTSPPPDQQPRQPGELEHREAIQLRDLPGYPQQ. Residues 46 to 66 traverse the membrane as a helical segment; that stretch reads VLWKLIIYSIAVLVLPLSAYF. Over 67 to 79 the chain is Lumenal; that stretch reads YSVNYVFDGNTTY. A helical transmembrane segment spans residues 80–100; the sequence is AGATAAITANLILFSYIVVAM. The Cytoplasmic portion of the chain corresponds to 101-127; sequence REDKGDQEQLREQQQLRGNKEETKKMK. Residues 107 to 127 are disordered; the sequence is QEQLREQQQLRGNKEETKKMK. The segment covering 118-127 has biased composition (basic and acidic residues); sequence GNKEETKKMK. Residues 124–127 carry the Prevents secretion from ER motif; sequence KKMK.

The protein belongs to the VMA21 family.

It is found in the endoplasmic reticulum membrane. The protein localises to the endoplasmic reticulum-Golgi intermediate compartment membrane. It localises to the cytoplasmic vesicle. Its subcellular location is the COPII-coated vesicle membrane. Required for the assembly of the V0 complex of the vacuolar ATPase (V-ATPase) in the endoplasmic reticulum. This chain is Vacuolar ATPase assembly integral membrane protein VMA21, found in Coccidioides immitis (strain RS) (Valley fever fungus).